The following is a 286-amino-acid chain: tRNA (guanine-N(7)-)-methyltransferase (286 aa).

A disordered region spans residues 1–22; the sequence is MGRARPKSQKRGDYRVSRSQEN. Residues Gly104, 127–128, 162–163, and Cys182 contribute to the S-adenosyl-L-methionine site; these read EI and NS. The active site involves Asp185. 260 to 262 contributes to the S-adenosyl-L-methionine binding site; it reads TEE.

Belongs to the class I-like SAM-binding methyltransferase superfamily. TrmB family. As to quaternary structure, forms a complex with TRM82.

It is found in the nucleus. The enzyme catalyses guanosine(46) in tRNA + S-adenosyl-L-methionine = N(7)-methylguanosine(46) in tRNA + S-adenosyl-L-homocysteine. It functions in the pathway tRNA modification; N(7)-methylguanine-tRNA biosynthesis. Its function is as follows. Catalyzes the formation of N(7)-methylguanine at position 46 (m7G46) in tRNA. The polypeptide is tRNA (guanine-N(7)-)-methyltransferase (Colletotrichum orbiculare (strain 104-T / ATCC 96160 / CBS 514.97 / LARS 414 / MAFF 240422) (Cucumber anthracnose fungus)).